We begin with the raw amino-acid sequence, 443 residues long: Thymidine phosphorylase (443 aa).

It belongs to the thymidine/pyrimidine-nucleoside phosphorylase family. Homodimer.

The catalysed reaction is thymidine + phosphate = 2-deoxy-alpha-D-ribose 1-phosphate + thymine. Its pathway is pyrimidine metabolism; dTMP biosynthesis via salvage pathway; dTMP from thymine: step 1/2. Its function is as follows. The enzymes which catalyze the reversible phosphorolysis of pyrimidine nucleosides are involved in the degradation of these compounds and in their utilization as carbon and energy sources, or in the rescue of pyrimidine bases for nucleotide synthesis. This is Thymidine phosphorylase from Shewanella denitrificans (strain OS217 / ATCC BAA-1090 / DSM 15013).